Reading from the N-terminus, the 477-residue chain is Probable glycine dehydrogenase (decarboxylating) subunit 2 (477 aa).

K264 carries the post-translational modification N6-(pyridoxal phosphate)lysine.

This sequence belongs to the GcvP family. C-terminal subunit subfamily. In terms of assembly, the glycine cleavage system is composed of four proteins: P, T, L and H. In this organism, the P 'protein' is a heterodimer of two subunits. Pyridoxal 5'-phosphate is required as a cofactor.

It carries out the reaction N(6)-[(R)-lipoyl]-L-lysyl-[glycine-cleavage complex H protein] + glycine + H(+) = N(6)-[(R)-S(8)-aminomethyldihydrolipoyl]-L-lysyl-[glycine-cleavage complex H protein] + CO2. The glycine cleavage system catalyzes the degradation of glycine. The P protein binds the alpha-amino group of glycine through its pyridoxal phosphate cofactor; CO(2) is released and the remaining methylamine moiety is then transferred to the lipoamide cofactor of the H protein. The protein is Probable glycine dehydrogenase (decarboxylating) subunit 2 of Fervidobacterium nodosum (strain ATCC 35602 / DSM 5306 / Rt17-B1).